Reading from the N-terminus, the 1574-residue chain is MSFEVGTRCWYPHKELGWIGAEVIKNEFNDGKYHLELQLEDDEIVSVDTKDLNNDKDQSLPLLRNPPILEATEDLTSLSYLNEPAVLHAIKQRYSQLNIYTYSGIVLIATNPFDRVDQLYTQDMIQAYAGKRRGELEPHLFAIAEEAYRLMKNDKQNQTIVVSGESGAGKTVSAKYIMRYFASVEEENSATVQHQVEMSETEQKILATNPIMEAFGNAKTTRNDNSSRFGKYLEILFDKDTSIIGARIRTYLLERSRLVYQPPIERNYHIFYQLMAGLPAQTKEELHLTDASDYFYMNQGGDTKINGIDDAKEYKITVDALTLVGITKETQHQIFKILAALLHIGNIEIKKTRNDASLSADEPNLKLACELLGIDAYNFAKWVTKKQIITRSEKIVSNLNYSQALVAKDSVAKFIYSALFDWLVENINTVLCNPAVNDQISSFIGVLDIYGFEHFEKNSFEQFCINYANEKLQQEFNQHVFKLEQEEYVKEEIEWSFIEFNDNQPCIDLIENKLGILSLLDEESRLPAGSDESWTQKLYQTLDKSPTNKVFSKPRFGQTKFIVSHYALDVAYDVEGFIEKNRDTVSDGHLEVLKASTNETLINILEGLEKAAKKLEEAKKLELEQAGSKKPGPIRTVNRKPTLGSMFKQSLIELMNTINSTNVHYIRCIKPNADKEAWQFDNLMVLSQLRACGVLETIRISCAGFPSRWTFEEFVLRYYILIPHEQWDLIFKKKETTEEDIISVVKMILDATVKDKSKYQIGNTKIFFKAGMLAYLEKLRSNKMHNSIVMIQKKIRAKYYRKQYLQISQAIKYLQNNIKGFIIRQRVNDEMKVNCATLLQAAYRGHSIRANVFSVLRTITNLQKKIRKELKQRQLKQEHEYNAAVTIQSKVRTFEPRSRFLRTKKDTVVVQSLIRRRAAQRKLKQLKADAKSVNHLKEVSYKLENKVIELTQNLASKVKENKEMTERIKELQVQVEESAKLQETLENMKKEHLIDIDNQKSKDMELQKTIENNLQSTEQTLKDAQLELEDMVKQHDELKEESKKQLEELEQTKKTLVEYQTLNGDLQNEVKSLKEEIARLQTAMSLGTVTTSVLPQTPLKDVMGGGASNFNNMMLENSDLSPNDLNLKSRSTPSSGNNHIDSLSVDRENGVNATQINEELYRLLEDTEILNQEITEGLLKGFEVPDAGVAIQLSKRDVVYPARILIIVLSEMWRFGLTKQSESFLAQVLTTIQKVVTQLKGNDLIPSGVFWLANVRELYSFVVFALNSILTEETFKNGMTDEEYKEYVSLVTELKDDFEALSYNIYNIWLKKLQKQLQKKAINAVVISESLPGFSAGETSGFLNKIFANTEEYTMDDILTFFNSIYWCMKSFHIENEVFHAVVTTLLNYVDAICFNELIMKRNFLSWKRGLQLNYNVTRLEEWCKTHGLTDGTECLQHLIQTAKLLQVRKYTIEDIDILRGICYSLTPAQLQKLISQYQVADYESPIPQEILRYVADIVKKEAALSSSGNDSKGHEHSSSIFITPETGPFTDPFSLIKTRKFDQVEAYIPAWLSLPSTKRIVDLVAQQVVQDGH.

Position 2 is an N-acetylserine (S2). Positions 4–57 (EVGTRCWYPHKELGWIGAEVIKNEFNDGKYHLELQLEDDEIVSVDTKDLNNDKD) constitute a Myosin N-terminal SH3-like domain. The Myosin motor domain maps to 70 to 781 (EATEDLTSLS…MLAYLEKLRS (712 aa)). ATP is bound at residue 164–171 (GESGAGKT). Positions 443–523 (FIGVLDIYGF…LGILSLLDEE (81 aa)) are actin-binding. IQ domains lie at 784 to 806 (MHNSIVMIQKKIRAKYYRKQYLQ), 807 to 831 (ISQAIKYLQNNIKGFIIRQRVNDEM), 832 to 855 (KVNCATLLQAAYRGHSIRANVFSV), 856 to 879 (LRTITNLQKKIRKELKQRQLKQEH), 880 to 902 (EYNAAVTIQSKVRTFEPRSRFLR), and 903 to 932 (TKKDTVVVQSLIRRRAAQRKLKQLKADAKS). Residues 933–1088 (VNHLKEVSYK…RLQTAMSLGT (156 aa)) are a coiled coil. Residues 1087–1574 (GTVTTSVLPQ…VAQQVVQDGH (488 aa)) are non alpha-helical, tail domain. The residue at position 1097 (T1097) is a Phosphothreonine. Position 1121 is a phosphoserine (S1121). Positions 1226–1501 (AQVLTTIQKV…LRYVADIVKK (276 aa)) constitute a Dilute domain.

This sequence belongs to the TRAFAC class myosin-kinesin ATPase superfamily. Myosin family. As to quaternary structure, homodimer. Interacts with calmodulin (CMD1) and the myosin light chain MLC1 through its IQ repeats. Binds to the membrane receptors SEC4 and VAC17 to transport secretory vesicles and the vacuole, respectively. Binds to KAR9, which transports BIM1-coated cytoplasmic microtubules that are attached to the spindle pole body into the emerging bud, thereby correctly orienting the mitotic spindle. Interacts with YPT11 and MMR1 to accelerate mitochondrial distribution to the bud. Interacts with SHE4 and localizes it to the bud tip. Interacts with RHO3 and SMY1, putative regulators of MYO2 function. Interacts with SRO7.

The protein resides in the bud neck. Its subcellular location is the bud tip. Myosin heavy chain that is required for the cell cycle-regulated transport of various organelles and proteins for their segregation. Functions by binding with its tail domain to receptor proteins on organelles and exerting force with its N-terminal motor domain against actin filaments, thereby transporting its cargo along polarized actin cables. Essential for the delivery of secretory vesicles to sites of active growth during bud emergence and cytokinesis. Required for segregation and inheritance of peroxisomes, late Golgi compartments, mitochondria and the vacuole to the daughter cell during cell division. Also required for correct alignment of the spindle during mitosis. This chain is Myosin-2 (MYO2), found in Saccharomyces cerevisiae (strain ATCC 204508 / S288c) (Baker's yeast).